The sequence spans 291 residues: Bifunctional protein FolD (291 aa).

Residues 167 to 169, serine 192, and isoleucine 233 contribute to the NADP(+) site; that span reads GRS.

The protein belongs to the tetrahydrofolate dehydrogenase/cyclohydrolase family. Homodimer.

The enzyme catalyses (6R)-5,10-methylene-5,6,7,8-tetrahydrofolate + NADP(+) = (6R)-5,10-methenyltetrahydrofolate + NADPH. It carries out the reaction (6R)-5,10-methenyltetrahydrofolate + H2O = (6R)-10-formyltetrahydrofolate + H(+). It participates in one-carbon metabolism; tetrahydrofolate interconversion. Catalyzes the oxidation of 5,10-methylenetetrahydrofolate to 5,10-methenyltetrahydrofolate and then the hydrolysis of 5,10-methenyltetrahydrofolate to 10-formyltetrahydrofolate. This chain is Bifunctional protein FolD, found in Dichelobacter nodosus (strain VCS1703A).